The primary structure comprises 213 residues: 2-C-methyl-D-erythritol 4-phosphate cytidylyltransferase (213 aa).

Belongs to the IspD/TarI cytidylyltransferase family. IspD subfamily.

The catalysed reaction is 2-C-methyl-D-erythritol 4-phosphate + CTP + H(+) = 4-CDP-2-C-methyl-D-erythritol + diphosphate. The protein operates within isoprenoid biosynthesis; isopentenyl diphosphate biosynthesis via DXP pathway; isopentenyl diphosphate from 1-deoxy-D-xylulose 5-phosphate: step 2/6. Functionally, catalyzes the formation of 4-diphosphocytidyl-2-C-methyl-D-erythritol from CTP and 2-C-methyl-D-erythritol 4-phosphate (MEP). The polypeptide is 2-C-methyl-D-erythritol 4-phosphate cytidylyltransferase (Thermus thermophilus (strain ATCC BAA-163 / DSM 7039 / HB27)).